Consider the following 345-residue polypeptide: Acetylserotonin O-methyltransferase (345 aa).

S-adenosyl-L-methionine is bound by residues tyrosine 147, tryptophan 164, aspartate 210, 235 to 237 (GDF), and arginine 252. Histidine 255 serves as the catalytic Proton donor/acceptor. Residues aspartate 256, asparagine 302, and glutamine 306 each coordinate substrate.

The protein belongs to the class I-like SAM-binding methyltransferase superfamily. Cation-independent O-methyltransferase family. As to quaternary structure, homodimer. In terms of tissue distribution, expressed in the pineal gland (at protein level). In the retina, very low expression is found at the mRNA level, and not at the protein level.

The catalysed reaction is N-acetylserotonin + S-adenosyl-L-methionine = melatonin + S-adenosyl-L-homocysteine + H(+). The protein operates within aromatic compound metabolism; melatonin biosynthesis; melatonin from serotonin: step 1/2. In terms of biological role, catalyzes the transfer of a methyl group onto N-acetylserotonin, producing melatonin (N-acetyl-5-methoxytryptamine). Its function is as follows. Does not show Acetylserotonin O-methyltransferase activity. The protein is Acetylserotonin O-methyltransferase (ASMT) of Homo sapiens (Human).